The chain runs to 274 residues: 2,3,4,5-tetrahydropyridine-2,6-dicarboxylate N-succinyltransferase (274 aa).

Substrate is bound by residues Arg104 and Asp141.

This sequence belongs to the transferase hexapeptide repeat family. In terms of assembly, homotrimer.

Its subcellular location is the cytoplasm. The catalysed reaction is (S)-2,3,4,5-tetrahydrodipicolinate + succinyl-CoA + H2O = (S)-2-succinylamino-6-oxoheptanedioate + CoA. Its pathway is amino-acid biosynthesis; L-lysine biosynthesis via DAP pathway; LL-2,6-diaminopimelate from (S)-tetrahydrodipicolinate (succinylase route): step 1/3. In Wigglesworthia glossinidia brevipalpis, this protein is 2,3,4,5-tetrahydropyridine-2,6-dicarboxylate N-succinyltransferase.